A 160-amino-acid chain; its full sequence is Nucleotide-binding protein Noc_2254 (160 aa).

The protein belongs to the YajQ family.

Functionally, nucleotide-binding protein. The protein is Nucleotide-binding protein Noc_2254 of Nitrosococcus oceani (strain ATCC 19707 / BCRC 17464 / JCM 30415 / NCIMB 11848 / C-107).